A 158-amino-acid chain; its full sequence is Low molecular weight phosphotyrosine protein phosphatase (158 aa).

The residue at position 2 (A2) is an N-acetylalanine. C13 acts as the Nucleophile in catalysis. R19 is an active-site residue. The Proton donor role is filled by D130. Residues Y132 and Y133 each carry the phosphotyrosine modification.

The protein belongs to the low molecular weight phosphotyrosine protein phosphatase family.

It localises to the cytoplasm. The catalysed reaction is O-phospho-L-tyrosyl-[protein] + H2O = L-tyrosyl-[protein] + phosphate. The enzyme catalyses a phosphate monoester + H2O = an alcohol + phosphate. Acts on tyrosine phosphorylated proteins, low-MW aryl phosphates and natural and synthetic acyl phosphates. The protein is Low molecular weight phosphotyrosine protein phosphatase (ACP1) of Gallus gallus (Chicken).